The following is a 261-amino-acid chain: MIELQDETTIKIKPLDLDMINPNPANFMDPNQGGSKIFIIGKSGSGKSTLIRSLFYNKSQIIPVAQAMSGTESETGFYRQFIPSAYIFDEYDSQALGNMIMRQKAARQYLANPWTMLIIDDCMDETSVFNKTPQPALFKNGRHWKMLYLVALQYALDVKPGIRSNIDGVFIFRESNVAIRKRLYDNYAGIIPTFQLFEKIMDEITKDYTALYIHNVTTSNDWRDCVFYYKAPFENQHVDQFKFGCCEYRGYGAKILKPHLK.

41-48 (GKSGSGKS) provides a ligand contact to ATP.

Belongs to the IIV-6 075L family.

This is an uncharacterized protein from Invertebrate iridescent virus 3 (IIV-3).